A 149-amino-acid chain; its full sequence is 3-hydroxyacyl-[acyl-carrier-protein] dehydratase FabZ (149 aa).

Residue H53 is part of the active site.

This sequence belongs to the thioester dehydratase family. FabZ subfamily.

The protein resides in the cytoplasm. The enzyme catalyses a (3R)-hydroxyacyl-[ACP] = a (2E)-enoyl-[ACP] + H2O. Functionally, involved in unsaturated fatty acids biosynthesis. Catalyzes the dehydration of short chain beta-hydroxyacyl-ACPs and long chain saturated and unsaturated beta-hydroxyacyl-ACPs. The sequence is that of 3-hydroxyacyl-[acyl-carrier-protein] dehydratase FabZ from Neisseria meningitidis serogroup C / serotype 2a (strain ATCC 700532 / DSM 15464 / FAM18).